The chain runs to 90 residues: Acyl-CoA-binding protein homolog (90 aa).

Residues 3-89 (LQEQFDQAAS…VESLIASLGL (87 aa)) enclose the ACB domain. An acyl-CoA-binding positions include Arg-15, 30-34 (YALFK), Lys-53, Lys-57, and Tyr-76.

This sequence belongs to the ACBP family.

Binds medium- and long-chain acyl-CoA esters with very high affinity and may function as an intracellular carrier of acyl-CoA esters. The chain is Acyl-CoA-binding protein homolog from Manduca sexta (Tobacco hawkmoth).